A 155-amino-acid polypeptide reads, in one-letter code: UPF0178 protein Amet_2995 (155 aa).

The protein belongs to the UPF0178 family.

This is UPF0178 protein Amet_2995 from Alkaliphilus metalliredigens (strain QYMF).